Here is a 374-residue protein sequence, read N- to C-terminus: Probable carboxylesterase 4, mitochondrial (374 aa).

The transit peptide at 1 to 52 (MLRRITCSSSLASPSLFLRFFRQLPRSYSSPTTIAVSGRNIRRLSTPTTLRC) directs the protein to the mitochondrion. The Involved in the stabilization of the negatively charged intermediate by the formation of the oxyanion hole motif lies at 135-137 (HGG). Catalysis depends on residues Ser219, Asp317, and His349.

This sequence belongs to the 'GDXG' lipolytic enzyme family. As to expression, expressed in leaves, stems, flowers and siliques.

The protein localises to the mitochondrion. The enzyme catalyses a carboxylic ester + H2O = an alcohol + a carboxylate + H(+). Functionally, carboxylesterase acting on esters with varying acyl chain length. This is Probable carboxylesterase 4, mitochondrial (CXE4) from Arabidopsis thaliana (Mouse-ear cress).